The chain runs to 977 residues: ELMO domain-containing protein A (977 aa).

The ELMO domain occupies 383-561 (EHDALLMKLW…SVKNLIITAL (179 aa)). Low complexity-rich tracts occupy residues 792–838 (SSNN…NNSG) and 852–897 (QQQQ…SSSS). Residues 792–899 (SSNNNIKDNL…SSSSSSSSNP (108 aa)) form a disordered region.

In terms of assembly, associates with mhcA.

In terms of biological role, functions as a negative regulator of actin polymerization. Modulates actin/myosin II at cortex actinomyosins to prevent excessive F-actin polymerization around the cell periphery, thereby maintaining proper cell shape during phagocytosis and chemotaxis. This Dictyostelium discoideum (Social amoeba) protein is ELMO domain-containing protein A (elmoA).